The following is a 270-amino-acid chain: Putative phosphoenolpyruvate synthase regulatory protein (270 aa).

An ADP-binding site is contributed by 150-157 (GVSRCGKT).

It belongs to the pyruvate, phosphate/water dikinase regulatory protein family. PSRP subfamily.

It catalyses the reaction [pyruvate, water dikinase] + ADP = [pyruvate, water dikinase]-phosphate + AMP + H(+). The enzyme catalyses [pyruvate, water dikinase]-phosphate + phosphate + H(+) = [pyruvate, water dikinase] + diphosphate. Bifunctional serine/threonine kinase and phosphorylase involved in the regulation of the phosphoenolpyruvate synthase (PEPS) by catalyzing its phosphorylation/dephosphorylation. This Shewanella putrefaciens (strain CN-32 / ATCC BAA-453) protein is Putative phosphoenolpyruvate synthase regulatory protein.